The following is an 86-amino-acid chain: Large ribosomal subunit protein bL27 (86 aa).

Positions methionine 1–threonine 10 are enriched in gly residues. The tract at residues methionine 1–glycine 22 is disordered.

It belongs to the bacterial ribosomal protein bL27 family.

This chain is Large ribosomal subunit protein bL27, found in Polynucleobacter asymbioticus (strain DSM 18221 / CIP 109841 / QLW-P1DMWA-1) (Polynucleobacter necessarius subsp. asymbioticus).